The sequence spans 390 residues: 2-oxoisovalerate dehydrogenase subunit beta, mitochondrial (390 aa).

Residues 1–48 (MAAVAARAGGLLRLGAAGAERRRRGLRCAALVQGFLQPAVDDASQKRR) constitute a mitochondrion transit peptide. Tyrosine 150 is a thiamine diphosphate binding site. Residues glycine 176, leucine 178, threonine 179, cysteine 226, and aspartate 229 each contribute to the K(+) site. N6-acetyllysine is present on lysine 230. Asparagine 231 lines the K(+) pocket. Lysine 239 bears the N6-acetyllysine mark.

In terms of assembly, heterotetramer of 2 alpha/BCKDHA and 2 beta chains/BCKDHB that forms the branched-chain alpha-keto acid decarboxylase (E1) component of the BCKD complex. The branched-chain alpha-ketoacid dehydrogenase is a large complex composed of three major building blocks E1, E2 and E3. It is organized around E2, a 24-meric cubic core composed of DBT, to which are associated 6 to 12 copies of E1, and approximately 6 copies of the dehydrogenase E3, a DLD dimer. Thiamine diphosphate is required as a cofactor.

The protein resides in the mitochondrion matrix. The enzyme catalyses N(6)-[(R)-lipoyl]-L-lysyl-[protein] + 3-methyl-2-oxobutanoate + H(+) = N(6)-[(R)-S(8)-2-methylpropanoyldihydrolipoyl]-L-lysyl-[protein] + CO2. Its function is as follows. Together with BCKDHA forms the heterotetrameric E1 subunit of the mitochondrial branched-chain alpha-ketoacid dehydrogenase (BCKD) complex. The BCKD complex catalyzes the multi-step oxidative decarboxylation of alpha-ketoacids derived from the branched-chain amino-acids valine, leucine and isoleucine producing CO2 and acyl-CoA which is subsequently utilized to produce energy. The E1 subunit catalyzes the first step with the decarboxylation of the alpha-ketoacid forming an enzyme-product intermediate. A reductive acylation mediated by the lipoylamide cofactor of E2 extracts the acyl group from the E1 active site for the next step of the reaction. This chain is 2-oxoisovalerate dehydrogenase subunit beta, mitochondrial, found in Rattus norvegicus (Rat).